The sequence spans 308 residues: Coenzyme PQQ synthesis protein B (308 aa).

It belongs to the PqqB family.

It functions in the pathway cofactor biosynthesis; pyrroloquinoline quinone biosynthesis. May be involved in the transport of PQQ or its precursor to the periplasm. This is Coenzyme PQQ synthesis protein B from Klebsiella pneumoniae subsp. pneumoniae (strain ATCC 700721 / MGH 78578).